The primary structure comprises 65 residues: Alpha-conotoxine-like Am1.5 (65 aa).

The signal sequence occupies residues 1–21 (MGMRMMFTVFLLVVLATTVVS). A propeptide spanning residues 22 to 46 (FMSGRAFRDRNAAAKVSDLIALKAR) is cleaved from the precursor. E49 is modified (4-carboxyglutamate). The ser-Xaa-Pro motif, crucial for potent interaction with nAChR stretch occupies residues 52–54 (SHP). A 4-hydroxyproline mark is found at P54 and P61. E62 bears the 4-carboxyglutamate mark.

Belongs to the conotoxin A superfamily. Contains 2 disulfide bonds. Expressed by the venom duct.

It localises to the secreted. Its function is as follows. Alpha-conotoxins act on postsynaptic membranes, they bind to the nicotinic acetylcholine receptors (nAChR) and thus inhibit them. The protein is Alpha-conotoxine-like Am1.5 of Conus amadis (Amadis cone).